The following is a 948-amino-acid chain: Hexagonally packed intermediate-layer surface protein (948 aa).

The first 17 residues, 1-17 (MKKNIALMALTGILTLA), serve as a signal peptide directing secretion. Cystine bridges form between Cys-168/Cys-187 and Cys-554/Cys-666.

Post-translationally, glycosylated. Contains tightly bound reducing sugars (six per polypeptide chain) and fatty acids (covalently bound and located in the N-terminal region).

It localises to the secreted. Its subcellular location is the cell wall. The protein resides in the S-layer. In terms of biological role, shape maintenance, possible protection from noxious enzymes or exogenous and unsettling DNA, and may mediate homotypic cell-cell contacts. In Deinococcus radiodurans (strain ATCC 13939 / DSM 20539 / JCM 16871 / CCUG 27074 / LMG 4051 / NBRC 15346 / NCIMB 9279 / VKM B-1422 / R1), this protein is Hexagonally packed intermediate-layer surface protein (hpi).